The primary structure comprises 303 residues: Signal recognition particle receptor FtsY (303 aa).

GTP-binding positions include 108–115 (GVNGVGKT), 190–194 (DTAGR), and 254–257 (TKLD).

Belongs to the GTP-binding SRP family. FtsY subfamily. Part of the signal recognition particle protein translocation system, which is composed of SRP and FtsY. SRP is a ribonucleoprotein composed of Ffh and a 4.5S RNA molecule.

The protein localises to the cell inner membrane. The protein resides in the cytoplasm. It catalyses the reaction GTP + H2O = GDP + phosphate + H(+). Functionally, involved in targeting and insertion of nascent membrane proteins into the cytoplasmic membrane. Acts as a receptor for the complex formed by the signal recognition particle (SRP) and the ribosome-nascent chain (RNC). Interaction with SRP-RNC leads to the transfer of the RNC complex to the Sec translocase for insertion into the membrane, the hydrolysis of GTP by both Ffh and FtsY, and the dissociation of the SRP-FtsY complex into the individual components. This chain is Signal recognition particle receptor FtsY, found in Rickettsia prowazekii (strain Madrid E).